The primary structure comprises 314 residues: Olfactory receptor 6C6 (314 aa).

The Extracellular segment spans residues methionine 1 to valine 24. Residue asparagine 3 is glycosylated (N-linked (GlcNAc...) asparagine). Residues isoleucine 25 to isoleucine 45 traverse the membrane as a helical segment. Topologically, residues leucine 46 to asparagine 63 are cytoplasmic. The chain crosses the membrane as a helical span at residues phenylalanine 64 to valine 84. Topologically, residues threonine 85–cysteine 95 are extracellular. An intrachain disulfide couples cysteine 95 to cysteine 177. The helical transmembrane segment at alanine 96–methionine 116 threads the bilayer. Residues serine 117–glutamine 141 are Cytoplasmic-facing. The helical transmembrane segment at leucine 142–leucine 162 threads the bilayer. Topologically, residues lysine 163–threonine 199 are extracellular. The chain crosses the membrane as a helical span at residues leucine 200–isoleucine 220. Topologically, residues lysine 221–serine 237 are cytoplasmic. A helical membrane pass occupies residues threonine 238–isoleucine 258. Topologically, residues lysine 259–serine 269 are extracellular. A helical membrane pass occupies residues lysine 270 to leucine 290. Topologically, residues arginine 291–phenylalanine 314 are cytoplasmic.

The protein belongs to the G-protein coupled receptor 1 family.

It is found in the cell membrane. Odorant receptor. This chain is Olfactory receptor 6C6 (OR6C6), found in Homo sapiens (Human).